Here is a 101-residue protein sequence, read N- to C-terminus: CRISPR-associated endoribonuclease Cas2 (101 aa).

Position 8 (aspartate 8) interacts with Mg(2+).

Belongs to the CRISPR-associated endoribonuclease Cas2 protein family. As to quaternary structure, homodimer, forms a heterotetramer with a Cas1 homodimer. It depends on Mg(2+) as a cofactor.

Functionally, CRISPR (clustered regularly interspaced short palindromic repeat), is an adaptive immune system that provides protection against mobile genetic elements (viruses, transposable elements and conjugative plasmids). CRISPR clusters contain sequences complementary to antecedent mobile elements and target invading nucleic acids. CRISPR clusters are transcribed and processed into CRISPR RNA (crRNA). Functions as a ssRNA-specific endoribonuclease. Involved in the integration of spacer DNA into the CRISPR cassette. The polypeptide is CRISPR-associated endoribonuclease Cas2 (Parvibaculum lavamentivorans (strain DS-1 / DSM 13023 / NCIMB 13966)).